The following is a 521-amino-acid chain: CDP-diacylglycerol--glycerol-3-phosphate 3-phosphatidyltransferase (521 aa).

91-98 (ASLYLGKS) is an ATP binding site. 2 consecutive PLD phosphodiesterase domains span residues 177–203 (GLGL…SNDY) and 419–457 (NGWS…TRRA). Residues histidine 182, lysine 184, and aspartate 189 contribute to the active site.

Belongs to the CDP-alcohol phosphatidyltransferase class-II family.

The protein resides in the mitochondrion. It catalyses the reaction a CDP-1,2-diacyl-sn-glycerol + sn-glycerol 3-phosphate = a 1,2-diacyl-sn-glycero-3-phospho-(1'-sn-glycero-3'-phosphate) + CMP + H(+). Its pathway is phospholipid metabolism; phosphatidylglycerol biosynthesis; phosphatidylglycerol from CDP-diacylglycerol: step 1/2. Its function is as follows. Essential for the viability of mitochondrial petite mutant. Catalyzes the committed step to the synthesis of the acidic phospholipids. The sequence is that of CDP-diacylglycerol--glycerol-3-phosphate 3-phosphatidyltransferase (PGS1) from Saccharomyces cerevisiae (strain ATCC 204508 / S288c) (Baker's yeast).